A 246-amino-acid polypeptide reads, in one-letter code: UL16-binding protein 2 (246 aa).

The N-terminal stretch at 1–25 (MAAAAATKILLCLPLLLLLSGWSRA) is a signal peptide. The segment at 29–117 (DPHSLCYDIT…IQLENYTPKE (89 aa)) is MHC class I alpha-1 like. A disulfide bridge connects residues C50 and C66. N-linked (GlcNAc...) asparagine glycosylation is found at N68 and N82. An MHC class I alpha-2 like region spans residues 118-210 (PLTLQARMSC…MDSTLEPSAG (93 aa)). The cysteines at positions 127 and 190 are disulfide-linked. S216 provides a ligand contact to a protein. S217 carries GPI-anchor amidated serine lipidation. The propeptide at 218–246 (GTTQLRATATTLILCCLLIILPCFILPGI) is removed in mature form.

This sequence belongs to the MHC class I family. As to quaternary structure, interacts with KLRK1/NKG2D. Does not bind to beta2-microglobulin. (Microbial infection) In CMV-infected cells, interacts with the viral glycoprotein UL16; this interaction causes ULBP2 retention in the endoplasmic reticulum and cis-Golgi and prevents binding to and activation of KLRK1/NKG2D, providing CMV with an immune evasion mechanism. As to expression, expressed in various types of cancer cell lines and in the fetus, but not in normal tissues.

It localises to the cell membrane. It is found in the endoplasmic reticulum. Its subcellular location is the secreted. Functionally, binds and activates the KLRK1/NKG2D receptor, mediating natural killer cell cytotoxicity. This chain is UL16-binding protein 2, found in Homo sapiens (Human).